Reading from the N-terminus, the 359-residue chain is DNA-directed RNA polymerase RPB3-11 homolog (359 aa).

The protein in the N-terminal section; belongs to the archaeal RpoD/eukaryotic RPB3 RNA polymerase subunit family. It in the C-terminal section; belongs to the archaeal RpoL/eukaryotic RPB11/RPC19 RNA polymerase subunit family. Part of the viral DNA-directed RNA polymerase that consists of 8 polII-like subunits (RPB1, RPB2, RPB3, RPB5, RPB6, RPB7, RPB9, RPB10), a capping enzyme and a termination factor.

It localises to the host cytoplasm. The protein resides in the virion. In terms of biological role, component of the DNA-directed RNA polymerase (RNAP) that catalyzes the transcription in the cytoplasm of viral DNA into RNA using the four ribonucleoside triphosphates as substrates. This chain is DNA-directed RNA polymerase RPB3-11 homolog, found in Ornithodoros (relapsing fever ticks).